A 240-amino-acid chain; its full sequence is Large ribosomal subunit protein uL2 (240 aa).

A disordered region spans residues histidine 200–glutamate 240.

This sequence belongs to the universal ribosomal protein uL2 family. In terms of assembly, part of the 50S ribosomal subunit. Forms a bridge to the 30S subunit in the 70S ribosome. Interacts weakly with protein L37Ae.

Functionally, one of the primary rRNA binding proteins. Required for association of the 30S and 50S subunits to form the 70S ribosome, for tRNA binding and peptide bond formation. It has been suggested to have peptidyltransferase activity; this is somewhat controversial. Makes several contacts with the 16S rRNA in the 70S ribosome. This chain is Large ribosomal subunit protein uL2 (rpl2), found in Haloarcula marismortui (strain ATCC 43049 / DSM 3752 / JCM 8966 / VKM B-1809) (Halobacterium marismortui).